A 458-amino-acid chain; its full sequence is RuvB-like helicase 1 (458 aa).

Residues 1 to 29 (MVQISEVKGNSRDNRTAAHTHIKGLGLRP) are disordered. 71 to 78 (GGPGTGKT) provides a ligand contact to ATP.

This sequence belongs to the RuvB family. May form heterododecamers with RVB2. Component of the SWR1 chromatin remodeling complex, the INO80 chromatin remodeling complex, and of the R2TP complex.

The protein localises to the nucleus. It catalyses the reaction ATP + H2O = ADP + phosphate + H(+). In terms of biological role, DNA helicase which participates in several chromatin remodeling complexes, including the SWR1 and the INO80 complexes. The SWR1 complex mediates the ATP-dependent exchange of histone H2A for the H2A variant HZT1 leading to transcriptional regulation of selected genes by chromatin remodeling. The INO80 complex remodels chromatin by shifting nucleosomes and is involved in DNA repair. Also involved in pre-rRNA processing. In Emericella nidulans (strain FGSC A4 / ATCC 38163 / CBS 112.46 / NRRL 194 / M139) (Aspergillus nidulans), this protein is RuvB-like helicase 1 (rvb1).